The following is an 873-amino-acid chain: Leucine--tRNA ligase (873 aa).

Residues 43 to 53 (PYPSGSLHMGH) carry the 'HIGH' region motif. The 'KMSKS' region motif lies at 624–628 (TMSKS). Lysine 627 is an ATP binding site.

It belongs to the class-I aminoacyl-tRNA synthetase family.

Its subcellular location is the cytoplasm. It catalyses the reaction tRNA(Leu) + L-leucine + ATP = L-leucyl-tRNA(Leu) + AMP + diphosphate. The sequence is that of Leucine--tRNA ligase from Synechococcus sp. (strain JA-3-3Ab) (Cyanobacteria bacterium Yellowstone A-Prime).